The sequence spans 61 residues: MSFLKKSLFLVLFLGLVSFSICEEEKRETEEEENEDEMDKESEEKRESPERPPGFTPFRVD.

The first 22 residues, 1 to 22, serve as a signal peptide directing secretion; sequence MSFLKKSLFLVLFLGLVSFSIC. A propeptide spanning residues 23–50 is cleaved from the precursor; sequence EEEKRETEEEENEDEMDKESEEKRESPE. Positions 24 to 61 are disordered; that stretch reads EEKRETEEEENEDEMDKESEEKRESPERPPGFTPFRVD. Over residues 30–41 the composition is skewed to acidic residues; the sequence is EEEENEDEMDKE. Position 53 is a 4-hydroxyproline; in form [Hyp3,Thr6]-bradykinyl-Val,Asp and [Hyp3,Thr6]-bradykinin (proline 53).

Belongs to the frog skin active peptide (FSAP) family. Bradykinin-related peptide subfamily. In terms of tissue distribution, expressed by the skin glands.

The protein resides in the secreted. In terms of biological role, induces relaxation of rat smooth muscle from tail artery (EC(50)=16.8 nM) and contraction of that from ileum (EC(50)=205 nM), urinary bladder (EC(50)=895 nM) and uterus (EC(50)=60.3 nM). Binds to both bradykinin receptor B1 (BDKRB1) and B2 (BDKRB2). [Hyp3,Thr6]-bradykinin: Induces relaxation of rat smooth muscle from tail artery (EC(50)=56.7 nM) and contraction of that from ileum (EC(50)=588 nM), urinary bladder (EC(50)=4.6 uM) and uterus (EC(50)=3.9 nM). Binds to both bradykinin receptor B1 (BDKRB1) and B2 (BDKRB2). In arterial smooth muscle, the effect via BDKRB1 is stronger, in uterus, ileum and urinary bladder that via BDKRB2. Its function is as follows. Induces relaxation of rat smooth muscle from tail artery (EC(50)=10.8 nM) and contraction of that from ileum (EC(50)=645 nM), urinary bladder (EC(50)=1.1 uM) and uterus (EC(50)=1.2 uM). Binds to both bradykinin receptor B1 (BDKRB1) and B2 (BDKRB2). Apart from uterus smooth muscle, the effect via B2 is stronger. Functionally, [Hyp3,Thr6]-bradykinyl-Val,Asp: Induces relaxation of rat smooth muscle from tail artery (EC(50)=3.5 nM) and contraction of that from ileum (EC(50)=223 nM), urinary bladder (EC(50)=1.5 uM) and uterus (EC(50)=356 nM). Binds to both bradykinin receptor B1 (BDKRB1) and B2 (BDKRB2); the effects via B2 a stronger. This is [Thr6]-bradykinyl-Val,Asp from Agalychnis callidryas (Red-eyed tree frog).